Consider the following 61-residue polypeptide: Small ribosomal subunit protein uS14B (61 aa).

Zn(2+)-binding residues include C24, C27, C40, and C43.

It belongs to the universal ribosomal protein uS14 family. Zinc-binding uS14 subfamily. Part of the 30S ribosomal subunit. Contacts proteins S3 and S10. The cofactor is Zn(2+).

Binds 16S rRNA, required for the assembly of 30S particles and may also be responsible for determining the conformation of the 16S rRNA at the A site. The protein is Small ribosomal subunit protein uS14B of Pediococcus pentosaceus (strain ATCC 25745 / CCUG 21536 / LMG 10740 / 183-1w).